Consider the following 300-residue polypeptide: 4-hydroxy-tetrahydrodipicolinate synthase (300 aa).

Residue Thr-57 coordinates pyruvate. The Proton donor/acceptor role is filled by Tyr-145. The active-site Schiff-base intermediate with substrate is the Lys-173. Residue Ile-213 coordinates pyruvate.

This sequence belongs to the DapA family. Homotetramer; dimer of dimers.

It is found in the cytoplasm. The catalysed reaction is L-aspartate 4-semialdehyde + pyruvate = (2S,4S)-4-hydroxy-2,3,4,5-tetrahydrodipicolinate + H2O + H(+). It participates in amino-acid biosynthesis; L-lysine biosynthesis via DAP pathway; (S)-tetrahydrodipicolinate from L-aspartate: step 3/4. Catalyzes the condensation of (S)-aspartate-beta-semialdehyde [(S)-ASA] and pyruvate to 4-hydroxy-tetrahydrodipicolinate (HTPA). The protein is 4-hydroxy-tetrahydrodipicolinate synthase of Corynebacterium urealyticum (strain ATCC 43042 / DSM 7109).